The chain runs to 204 residues: Cysteine-rich protein 3 (204 aa).

One can recognise an LIM zinc-binding 1 domain in the interval Trp-3–Pro-64. Residues Ile-88–Ala-107 are disordered. Residues Ser-122 to Pro-183 enclose the LIM zinc-binding 2 domain.

In terms of tissue distribution, expressed specifically by the thymus.

Its subcellular location is the cytoplasm. In Mus musculus (Mouse), this protein is Cysteine-rich protein 3 (Crip3).